The primary structure comprises 425 residues: Histone-binding protein RBBP7 (425 aa).

7 WD repeats span residues 47-122, 128-173, 181-217, 228-269, 275-312, 318-369, and 376-403; these read QWLP…KINH, RARY…LRLR, GLSW…KVVD, VVED…HSVD, VNCL…LHSF, EIFQ…LFIH, and ISDF…IWQM.

It belongs to the WD repeat RBAP46/RBAP48/MSI1 family. As to quaternary structure, binds directly to helix 1 of the histone fold of histone H4, a region that is not accessible when H4 is in chromatin.

It is found in the nucleus. Functionally, core histone-binding subunit that may target chromatin remodeling factors, histone acetyltransferases and histone deacetylases to their histone substrates in a manner that is regulated by nucleosomal DNA. Component of several complexes which regulate chromatin metabolism. The chain is Histone-binding protein RBBP7 (rbbp7) from Xenopus laevis (African clawed frog).